Here is a 444-residue protein sequence, read N- to C-terminus: Glutamate--tRNA ligase 2 (444 aa).

Residues 7 to 17 (PSPTGYLHVGN) carry the 'HIGH' region motif. Residues 240-244 (KLSKR) carry the 'KMSKS' region motif. Residue Lys-243 coordinates ATP.

Belongs to the class-I aminoacyl-tRNA synthetase family. Glutamate--tRNA ligase type 1 subfamily. Monomer.

Its subcellular location is the cytoplasm. It catalyses the reaction tRNA(Glu) + L-glutamate + ATP = L-glutamyl-tRNA(Glu) + AMP + diphosphate. In terms of biological role, catalyzes the attachment of glutamate to tRNA(Glu) in a two-step reaction: glutamate is first activated by ATP to form Glu-AMP and then transferred to the acceptor end of tRNA(Glu). This Gluconobacter oxydans (strain 621H) (Gluconobacter suboxydans) protein is Glutamate--tRNA ligase 2.